The sequence spans 253 residues: Ciliary microtubule associated protein 1B (253 aa).

The stretch at 182 to 207 (PGPCAYQVVSPGVYKSRAPQFTILAR) is one STPGR repeat.

Belongs to the CIMAP family.

The protein localises to the cell projection. Its subcellular location is the cilium. It is found in the flagellum. The polypeptide is Ciliary microtubule associated protein 1B (Homo sapiens (Human)).